The primary structure comprises 788 residues: Ribonucleoside-diphosphate reductase subunit alpha (788 aa).

The region spanning 2–92 is the ATP-cone domain; that stretch reads ITVVKRNGRI…LYDLYHKVSG (91 aa). ATP-binding positions include K6, 12–18, and T52; that span reads EPLDITK. Position 200 (T200) interacts with GDP. C216 and C497 form a disulfide bridge. DTTP-binding positions include 223–225 and R253; that span reads DNI. N424 contributes to the GDP binding site. N424 serves as the catalytic Proton acceptor. The active-site Cysteine radical intermediate is the C426. GDP contacts are provided by residues E428 and 661-663; that span reads SSI. The Proton acceptor role is filled by E428.

It belongs to the ribonucleoside diphosphate reductase large chain family. In terms of assembly, tetramer of two alpha and two beta subunits.

The catalysed reaction is a 2'-deoxyribonucleoside 5'-diphosphate + [thioredoxin]-disulfide + H2O = a ribonucleoside 5'-diphosphate + [thioredoxin]-dithiol. Under complex allosteric control mediated by deoxynucleoside triphosphates and ATP binding to separate specificity and activation sites on the alpha subunit. The type of nucleotide bound at the specificity site determines substrate preference. It seems probable that ATP makes the enzyme reduce CDP and UDP, dGTP favors ADP reduction and dTTP favors GDP reduction. Stimulated by ATP and inhibited by dATP binding to the activity site. Its function is as follows. Provides the precursors necessary for DNA synthesis. Catalyzes the biosynthesis of deoxyribonucleotides from the corresponding ribonucleotides. This Helicobacter pylori (strain J99 / ATCC 700824) (Campylobacter pylori J99) protein is Ribonucleoside-diphosphate reductase subunit alpha (nrdA).